The sequence spans 464 residues: 3-isopropylmalate dehydratase large subunit (464 aa).

Residues C337, C397, and C400 each coordinate [4Fe-4S] cluster.

Belongs to the aconitase/IPM isomerase family. LeuC type 1 subfamily. Heterodimer of LeuC and LeuD. The cofactor is [4Fe-4S] cluster.

The catalysed reaction is (2R,3S)-3-isopropylmalate = (2S)-2-isopropylmalate. It participates in amino-acid biosynthesis; L-leucine biosynthesis; L-leucine from 3-methyl-2-oxobutanoate: step 2/4. In terms of biological role, catalyzes the isomerization between 2-isopropylmalate and 3-isopropylmalate, via the formation of 2-isopropylmaleate. This chain is 3-isopropylmalate dehydratase large subunit, found in Bacillus thuringiensis (strain Al Hakam).